The primary structure comprises 482 residues: Membrane-bound lytic murein transglycosylase F (482 aa).

The first 13 residues, 1–13, serve as a signal peptide directing secretion; it reads MKGLFLRIITALA. Residues 14–267 form a non-LT domain region; sequence LLFWAIDMVF…NLKEKYLGHI (254 aa). Positions 268-482 are LT domain; that stretch reads SQFDYVDTRS…NLEEIKENKD (215 aa). Glutamate 312 is a catalytic residue.

The protein in the N-terminal section; belongs to the bacterial solute-binding protein 3 family. In the C-terminal section; belongs to the transglycosylase Slt family.

It is found in the cell outer membrane. The enzyme catalyses Exolytic cleavage of the (1-&gt;4)-beta-glycosidic linkage between N-acetylmuramic acid (MurNAc) and N-acetylglucosamine (GlcNAc) residues in peptidoglycan, from either the reducing or the non-reducing ends of the peptidoglycan chains, with concomitant formation of a 1,6-anhydrobond in the MurNAc residue.. Murein-degrading enzyme that degrades murein glycan strands and insoluble, high-molecular weight murein sacculi, with the concomitant formation of a 1,6-anhydromuramoyl product. Lytic transglycosylases (LTs) play an integral role in the metabolism of the peptidoglycan (PG) sacculus. Their lytic action creates space within the PG sacculus to allow for its expansion as well as for the insertion of various structures such as secretion systems and flagella. The sequence is that of Membrane-bound lytic murein transglycosylase F from Haemophilus influenzae (strain PittEE).